The primary structure comprises 62 residues: Protein UL148D (62 aa).

Residues 30-50 (WWISVAIVIFIGVCLVALMYF) traverse the membrane as a helical segment.

It localises to the host membrane. The protein is Protein UL148D (UL148D) of Human cytomegalovirus (strain Merlin) (HHV-5).